The sequence spans 620 residues: Ran-binding protein 10 (620 aa).

The tract at residues 1–41 (MAAATADPGAGNPQPGDSSGGGAGGGLPSPGEQELSRRLQR) is disordered. The residue at position 2 (A2) is an N-acetylalanine. Over residues 18-28 (SSGGGAGGGLP) the composition is skewed to gly residues. The B30.2/SPRY domain occupies 35 to 222 (LSRRLQRLYP…VDANFGQQPF (188 aa)). Positions 253–285 (WQAVLQNMVSSYLVHHGYCATATAFARMTETPI) constitute a LisH domain. One can recognise a CTLH domain in the interval 291-348 (SIKNRQKIQKLVLEGRVGEAIETTQRFYPGLLEHNPNLLFMLKCRQFVEMVNGTDSEV). The segment covering 347–398 (EVRSLSSRSPKSQDSYPGSPSLSPRHGPSSSHMHNTGADSPSCSNGVASTKS) has biased composition (polar residues). Residues 347–458 (EVRSLSSRSP…ETSDSEMEME (112 aa)) form a disordered region. S361 bears the Phosphoserine mark. Y362 bears the Phosphotyrosine mark. Phosphoserine is present on residues S365, S367, S369, S422, S451, and S453. A compositionally biased stretch (low complexity) spans 409–436 (SSSSSSSSSSSSSSPSSVNYSESNSTDS).

Belongs to the RANBP9/10 family. As to quaternary structure, may form homodimers. Identified in the CTLH complex that contains GID4, RANBP9 and/or RANBP10, MKLN1, MAEA, RMND5A (or alternatively its paralog RMND5B), GID8, ARMC8, WDR26 and YPEL5. Within this complex, MAEA, RMND5A (or alternatively its paralog RMND5B), GID8, WDR26, and RANBP9 and/or RANBP10 form the catalytic core, while GID4, MKLN1, ARMC8 and YPEL5 have ancillary roles. Interacts with RAN and RANBP9. Interacts with the HGF receptor MET. Interacts with AR. Interacts with TUBB1. Interacts with YPEL5. May interact with TUBB5. Interacts with DDX4. As to expression, broadly expressed, with highest levels in skeletal muscle.

It is found in the cytoplasm. It localises to the cytosol. Its subcellular location is the nucleus. Its function is as follows. May act as an adapter protein to couple membrane receptors to intracellular signaling pathways. Core component of the CTLH E3 ubiquitin-protein ligase complex that selectively accepts ubiquitin from UBE2H and mediates ubiquitination and subsequent proteasomal degradation of the transcription factor HBP1. Enhances dihydrotestosterone-induced transactivation activity of AR, as well as dexamethasone-induced transactivation activity of NR3C1, but does not affect estrogen-induced transactivation. Acts as a guanine nucleotide exchange factor (GEF) for RAN GTPase. May play an essential role in hemostasis and in maintaining microtubule dynamics with respect to both platelet shape and function. This Homo sapiens (Human) protein is Ran-binding protein 10 (RANBP10).